We begin with the raw amino-acid sequence, 241 residues long: MSYNGKDLGELQLKCHQSMLQAGAVFENCTFVNGDVLLEIPSFFIESLQFHYLINQSEKISLKLIFWNELVYLLGLNDTSKASATTSFQQGQIETKPDLTLFINELLTTKKEHKKLDNDNRESEIPFSDTRFHDEFDRESRACLHRSEFPKNPHAFLAQDLPHGLPHRRAALPCEALGFHPNVGDYFDWYPHRPNHFGGKFDGHSRGRGAGRGGFCGRHGRGGFGKRSGLHGCREEFWMQV.

It is found in the cytoplasm. It localises to the nucleus. This is an uncharacterized protein from Schizosaccharomyces pombe (strain 972 / ATCC 24843) (Fission yeast).